Here is a 338-residue protein sequence, read N- to C-terminus: Heat-inducible transcription repressor HrcA (338 aa).

Belongs to the HrcA family.

Functionally, negative regulator of class I heat shock genes (grpE-dnaK-dnaJ and groELS operons). Prevents heat-shock induction of these operons. This Bacillus mycoides (strain KBAB4) (Bacillus weihenstephanensis) protein is Heat-inducible transcription repressor HrcA.